Reading from the N-terminus, the 558-residue chain is Serine palmitoyltransferase 1 (558 aa).

The Lumenal segment spans residues 1 to 49 (MAHIPEVLPKSIPIPAFIVTTSSYLWYYFNLVLTQIPGGQFIVSYIKKS). The helical transmembrane segment at 50-84 (HHDDPYRTTVEIGLILYGIIYYLSKPQQKKSLQAQ) threads the bilayer. Over 85-341 (KPNLSPQEID…GRGLSEHFNM (257 aa)) the chain is Cytoplasmic. Thr-121 carries the phosphothreonine modification. The helical transmembrane segment at 342–371 (DRATAIDITVGSMATALGSTGGFVLGDSVM) threads the bilayer. The Lumenal segment spans residues 372–424 (CLHQRIGSNAYCFSACLPAYTVTSVSKVLKLMDSNNDAVQTLQKLSKSLHDSF). The helical transmembrane segment at 425–457 (ASDDSLRSYVIVTSSPVSAVLHLQLTPAYRSRK) threads the bilayer. Residues 458–558 (FGYTCEQLFE…ILACCQESNK (101 aa)) lie on the Cytoplasmic side of the membrane.

The protein belongs to the class-II pyridoxal-phosphate-dependent aminotransferase family. As to quaternary structure, LCB1 and LCB2 encode essential subunits of the enzyme and form a heterodimer. Component of the SPOTS complex, at least composed of LCB1/2 (LCB1 and/or LCB2), ORM1/2 (ORM1 and/or ORM2), SAC1 and TSC3. Interacts with LCB2 and TSC3. Pyridoxal 5'-phosphate is required as a cofactor.

It localises to the cytoplasm. It is found in the endoplasmic reticulum membrane. It catalyses the reaction L-serine + hexadecanoyl-CoA + H(+) = 3-oxosphinganine + CO2 + CoA. It functions in the pathway lipid metabolism; sphingolipid metabolism. Functionally, component of serine palmitoyltransferase (SPT), which catalyzes the committed step in the synthesis of sphingolipids, the condensation of serine with palmitoyl CoA to form the long chain base 3-ketosphinganine. The chain is Serine palmitoyltransferase 1 (LCB1) from Saccharomyces cerevisiae (strain ATCC 204508 / S288c) (Baker's yeast).